The sequence spans 292 residues: Nucleotide-binding protein SACE_2139 (292 aa).

15 to 22 is a binding site for ATP; that stretch reads GLSGAGRS. 66 to 69 provides a ligand contact to GTP; it reads DVRS.

This sequence belongs to the RapZ-like family.

In terms of biological role, displays ATPase and GTPase activities. The chain is Nucleotide-binding protein SACE_2139 from Saccharopolyspora erythraea (strain ATCC 11635 / DSM 40517 / JCM 4748 / NBRC 13426 / NCIMB 8594 / NRRL 2338).